Consider the following 245-residue polypeptide: 1-(5-phosphoribosyl)-5-[(5-phosphoribosylamino)methylideneamino] imidazole-4-carboxamide isomerase (245 aa).

D8 (proton acceptor) is an active-site residue. The active-site Proton donor is the D130.

The protein belongs to the HisA/HisF family.

It localises to the cytoplasm. The enzyme catalyses 1-(5-phospho-beta-D-ribosyl)-5-[(5-phospho-beta-D-ribosylamino)methylideneamino]imidazole-4-carboxamide = 5-[(5-phospho-1-deoxy-D-ribulos-1-ylimino)methylamino]-1-(5-phospho-beta-D-ribosyl)imidazole-4-carboxamide. Its pathway is amino-acid biosynthesis; L-histidine biosynthesis; L-histidine from 5-phospho-alpha-D-ribose 1-diphosphate: step 4/9. The chain is 1-(5-phosphoribosyl)-5-[(5-phosphoribosylamino)methylideneamino] imidazole-4-carboxamide isomerase from Ectopseudomonas mendocina (strain ymp) (Pseudomonas mendocina).